Reading from the N-terminus, the 946-residue chain is Calcium-transporting ATPase type 2C member 2 (946 aa).

The Cytoplasmic segment spans residues 1-106 (MVEGRVSEFL…DNSEPVWKKY (106 aa)). The segment at 71-95 (VDLHTGLSEFSVTQRRLAHGWNEFV) is interaction with ORAI1. A helical transmembrane segment spans residues 107-127 (LDQFKNPLILLLLGSALVSVL). Over 128–129 (TK) the chain is Extracellular. A helical membrane pass occupies residues 130 to 150 (EYEDAVSIATAVLVVVTVAFI). Topologically, residues 151 to 231 (QEYRSEKSLE…EAEPCSKTDS (81 aa)) are cytoplasmic. A helical membrane pass occupies residues 232–252 (PLTGGGDLTTLSNIVFMGTLV). Topologically, residues 253-293 (QYGRGQGVVIGTGESSQFGEVFKMMQAEETPKTPLQKSMDR) are extracellular. The residue at position 264 (Thr-264) is a Phosphothreonine. Residues Ser-267 and Ser-268 each carry the phosphoserine modification. Residues 294–314 (LGKQLTLFSFGIIGLIMLIGW) form a helical membrane-spanning segment. Topologically, residues 315 to 331 (SQGKQLLSMFTIGVSLA) are cytoplasmic. Ca(2+)-binding residues include Val-332, Ala-333, Ile-335, and Glu-337. A helical transmembrane segment spans residues 332–352 (VAAIPEGLPIVVMVTLVLGVL). Residues 353–750 (RMAKKRVIVK…ISALSLITLS (398 aa)) lie on the Extracellular side of the membrane. Residue Asp-379 is the 4-aspartylphosphate intermediate of the active site. Mg(2+)-binding residues include Asp-674 and Asp-678. Residues 751–771 (TVFNLPSPLNAMQILWINIIM) form a helical membrane-spanning segment. Ca(2+)-binding residues include Asn-768 and Asp-772. At 772 to 804 (DGPPAQSLGVEPVDKDAFRQPPRSVRDTILSRA) the chain is on the cytoplasmic side. The chain crosses the membrane as a helical span at residues 805-825 (LILKILMSAAIIISGTLFIFW). Residues 826–837 (KEMPEDRASTPR) lie on the Extracellular side of the membrane. Residues 838-855 (TTTMTFTCFVFFDLFNAL) form a helical membrane-spanning segment. Residues 856 to 874 (TCRSQTKLIFEIGFLRNHM) are Cytoplasmic-facing. The chain crosses the membrane as a helical span at residues 875–895 (FLYSVLGSILGQLAVIYIPPL). Over 896–905 (QRVFQTENLG) the chain is Extracellular. A helical membrane pass occupies residues 906 to 926 (ALDLLFLTGLASSVFILSELL). The Cytoplasmic portion of the chain corresponds to 927 to 946 (KLCEKYCCSPKRVQMHPEDV).

This sequence belongs to the cation transport ATPase (P-type) (TC 3.A.3) family. Type IIA subfamily. Interacts (via N-terminus) with ORAI1 (via N- and C-termini); this interaction regulates Ca(2+) influx at the plasma membrane. Highly expressed in the gastrointestinal and respiratory tracts, prostate, thyroid, salivary, and mammary glands. Expressed in colon epithelial cells (at protein level). Expressed in brain and testis (at protein level).

The protein resides in the golgi apparatus. Its subcellular location is the trans-Golgi network membrane. It is found in the cell membrane. It localises to the basolateral cell membrane. It catalyses the reaction Ca(2+)(in) + ATP + H2O = Ca(2+)(out) + ADP + phosphate + H(+). It carries out the reaction Mn(2+)(in) + ATP + H2O = Mn(2+)(out) + ADP + phosphate + H(+). ATP-driven pump that supplies the Golgi apparatus with Ca(2+) and Mn(2+) ions, both essential cofactors for processing and trafficking of newly synthesized proteins in the secretory pathway. Within a catalytic cycle, acquires Ca(2+) or Mn(2+) ions on the cytoplasmic side of the membrane and delivers them to the lumenal side. The transfer of ions across the membrane is coupled to ATP hydrolysis and is associated with a transient phosphorylation that shifts the pump conformation from inward-facing to outward-facing state. Induces Ca(2+) influx independently of its ATP-driven pump function. At the basolateral membrane of mammary epithelial cells, interacts with Ca(2+) channel ORAI1 and mediates Ca(2+) entry independently of the Ca(2+) content of endoplasmic reticulum or Golgi stores. May facilitate transepithelial transport of large quantities of Ca(2+) for milk secretion via activation of Ca(2+) influx channels at the plasma membrane and active Ca(2+) transport at the Golgi apparatus. The sequence is that of Calcium-transporting ATPase type 2C member 2 from Homo sapiens (Human).